The sequence spans 320 residues: Stress-involved WYL domain-containing regulator (320 aa).

One can recognise an HTH deoR-type domain in the interval 7–65 (TTGRVVQLLGLLQSRRVWTGEELAERLGVTGRSVRRDIERLRELGYPVHASKGQGGGYQ). A DNA-binding region (H-T-H motif) is located at residues 24–43 (WTGEELAERLGVTGRSVRRD). Residues 139–218 (DTAVAPDVLM…SDVRATGTTF (80 aa)) enclose the WYL domain. A WCX domain region spans residues 245–320 (VRYFAPEKVV…MADRLRRAVR (76 aa)).

In terms of assembly, homodimer.

Transcriptional activator. Acts as a transcriptional activator of the MSMEG_1357-56 operon upon genotoxic stress. Controls adjacent genes that belong to the DinB/YfiT-like putative metalloenzymes superfamily by upregulating their expression in response to various genotoxic stress conditions, including exposure to H(2)O(2) or the natural antibiotic zeocin, as well as mitomycin C (MMC), diamide and UVC radiation. Upon genotoxic stress, upregulates two genes encoding proteins of the DinB/YfiT-like putative metalloenzymes superfamily, MSMEG_1357 and MSMEG_1356. Binds different forms of single-stranded DNA (ssDNA) with high affinity, primarily through its characteristic WYL domain. Binds nucleic acids with single-stranded regions, such as polyT 20mer ssDNA, 5' tailed, 3' tailed and fork DNA, but not ssRNA. This is Stress-involved WYL domain-containing regulator from Mycolicibacterium smegmatis (strain ATCC 700084 / mc(2)155) (Mycobacterium smegmatis).